The sequence spans 360 residues: Isocitrate dehydrogenase [NAD] subunit 1, mitochondrial (360 aa).

A mitochondrion-targeting transit peptide spans 1-11; it reads MLNRTIAKRTL. Substrate contacts are provided by arginine 109, arginine 140, and aspartate 228. Aspartate 228 serves as a coordination point for Mg(2+).

Belongs to the isocitrate and isopropylmalate dehydrogenases family. Octamer of two non-identical subunits IDH1 and IDH2. Mg(2+) serves as cofactor. Mn(2+) is required as a cofactor.

It is found in the mitochondrion. The enzyme catalyses D-threo-isocitrate + NAD(+) = 2-oxoglutarate + CO2 + NADH. Allosterically regulated by several compounds including AMP, NAD(+), and citrate. Its function is as follows. Performs an essential role in the oxidative function of the citric acid cycle. Also binds RNA; specifically to the 5'-untranslated leaders of mitochondrial mRNAs. The polypeptide is Isocitrate dehydrogenase [NAD] subunit 1, mitochondrial (IDH1) (Saccharomyces cerevisiae (strain ATCC 204508 / S288c) (Baker's yeast)).